Reading from the N-terminus, the 368-residue chain is HECT-type ubiquitin ligase-interacting protein apyA (368 aa).

It belongs to the arrestin family. Interacts with hulA.

In terms of biological role, may be involved in signaling by recognizing appropriately phosphorylated substrates via its arrestin domains and then recruit a HECT-type ubiquitin ligase such as hulA, leading to ubiquitination of the substrate, providing a link between ubiquitination and phosphorylation in protein regulation and stability. The polypeptide is HECT-type ubiquitin ligase-interacting protein apyA (apyA) (Emericella nidulans (strain FGSC A4 / ATCC 38163 / CBS 112.46 / NRRL 194 / M139) (Aspergillus nidulans)).